Consider the following 57-residue polypeptide: U-Asilidin(1)-Mar2a (57 aa).

The signal sequence occupies residues 1–24 (MAPLLKLNILLLIVLICFTFHANA). Cystine bridges form between Cys-28–Cys-44, Cys-35–Cys-48, and Cys-43–Cys-53.

Belongs to the asilidin-1 family. Expressed by the venom gland. Exclusively expressed in the venom thoracic glands (and not in body tissues).

The protein resides in the secreted. In terms of biological role, may act as a neurotoxin. The polypeptide is U-Asilidin(1)-Mar2a (Machimus arthriticus (Breck robberfly)).